The primary structure comprises 123 residues: Large ribosomal subunit protein bL19c (123 aa).

Belongs to the bacterial ribosomal protein bL19 family.

It localises to the plastid. Its subcellular location is the chloroplast. In Porphyra purpurea (Red seaweed), this protein is Large ribosomal subunit protein bL19c (rpl19).